The following is a 763-amino-acid chain: Actin filament-associated protein 1-like 1 (763 aa).

Residues 83 to 137 form a disordered region; the sequence is LQDMPEDEAESCKAASPEPAKSPSLRHTADLPPPLPNRPPPEDYYEEALPLGPGK. Residues Ser98, Ser104, and Ser153 each carry the phosphoserine modification. Positions 169-210 are disordered; the sequence is TRMNGELKNSYNDSDAMSSSYESYDEEEEEGKGPQPTHQWPS. Residues 175-185 show a composition bias toward polar residues; it reads LKNSYNDSDAM. The 97-residue stretch at 220-316 folds into the PH 1 domain; that stretch reads DCRICAFLLR…WLKVIREVSK (97 aa). Ser329 and Ser343 each carry phosphoserine. Positions 343–380 are disordered; it reads SQEKQTSDSDSLGMGDSCSTLGREHGKGKKSSLSELKG. In terms of domain architecture, PH 2 spans 413–507; sequence EVPCCGYLNV…WLGLLLVEMG (95 aa). Phosphotyrosine is present on Tyr552. The segment at 561–604 is disordered; the sequence is QDEEPERPPGAQVKRHASTCSEKSHRVDPQVKVKRHASSAHQYK. A compositionally biased stretch (basic and acidic residues) spans 582–591; that stretch reads EKSHRVDPQV. Residues 606-694 are a coiled coil; that stretch reads GKNRAEEDAR…LVTVKERLQQ (89 aa). The span at 712 to 724 shows a compositional bias: polar residues; it reads SGETANKPQNNVP. The segment at 712-763 is disordered; the sequence is SGETANKPQNNVPEQPLPVNCVSELRKRSPSIINSNQGRVLQKAKEWEMKKT. Phosphoserine is present on Ser742. Residues 754 to 763 are compositionally biased toward basic and acidic residues; sequence KAKEWEMKKT.

As to quaternary structure, interacts with CTTN.

It localises to the cytoplasm. The protein resides in the cell projection. The protein localises to the podosome. It is found in the invadopodium. Its subcellular location is the cytoskeleton. It localises to the stress fiber. May be involved in podosome and invadosome formation. The protein is Actin filament-associated protein 1-like 1 (AFAP1L1) of Bos taurus (Bovine).